Consider the following 327-residue polypeptide: Malate dehydrogenase (327 aa).

NAD(+) is bound at residue 12–18 (GAAGQIG). The substrate site is built by Arg-93 and Arg-99. NAD(+) contacts are provided by residues Asn-106, Gln-113, and 130-132 (VGN). 2 residues coordinate substrate: Asn-132 and Arg-163. His-188 (proton acceptor) is an active-site residue.

This sequence belongs to the LDH/MDH superfamily. MDH type 2 family.

The enzyme catalyses (S)-malate + NAD(+) = oxaloacetate + NADH + H(+). Catalyzes the reversible oxidation of malate to oxaloacetate. This is Malate dehydrogenase from Cupriavidus necator (strain ATCC 17699 / DSM 428 / KCTC 22496 / NCIMB 10442 / H16 / Stanier 337) (Ralstonia eutropha).